Here is a 664-residue protein sequence, read N- to C-terminus: Intraflagellar transport protein 70A2 (664 aa).

7 TPR repeats span residues 11 to 44 (DGEF…SPRS), 45 to 78 (RAGL…HPEL), 153 to 186 (PDGL…SGYQ), 188 to 220 (DVSY…GIRQ), 395 to 423 (QVQE…EKYI), 424 to 456 (PVLM…CNDH), and 458 to 491 (VWKL…NYDN). Residues 507-534 (YIMTSQNEEAEELMRKIEKEEEQLSYGD) are a coiled coil. Residues 543–576 (CIVNLVIGTLYCAKGNYDFGISRVIKSLEPYHKK) form a TPR 8 repeat.

This sequence belongs to the TTC30/dfy-1/fleer family. In terms of assembly, interacts wit the IFT B complex component IFT52.

Its subcellular location is the cell projection. It localises to the cilium. In terms of biological role, required for polyglutamylation of axonemal tubulin. Plays a role in anterograde intraflagellar transport (IFT), the process by which cilia precursors are transported from the base of the cilium to the site of their incorporation at the tip. The polypeptide is Intraflagellar transport protein 70A2 (Ift70a2) (Rattus norvegicus (Rat)).